The following is a 162-amino-acid chain: ATP synthase subunit b (162 aa).

A helical transmembrane segment spans residues 6–26; the sequence is PDIGLLFWMLLSFGIVFFVAA.

Belongs to the ATPase B chain family. In terms of assembly, F-type ATPases have 2 components, F(1) - the catalytic core - and F(0) - the membrane proton channel. F(1) has five subunits: alpha(3), beta(3), gamma(1), delta(1), epsilon(1). F(0) has three main subunits: a(1), b(2) and c(10-14). The alpha and beta chains form an alternating ring which encloses part of the gamma chain. F(1) is attached to F(0) by a central stalk formed by the gamma and epsilon chains, while a peripheral stalk is formed by the delta and b chains.

The protein resides in the cell inner membrane. Functionally, f(1)F(0) ATP synthase produces ATP from ADP in the presence of a proton or sodium gradient. F-type ATPases consist of two structural domains, F(1) containing the extramembraneous catalytic core and F(0) containing the membrane proton channel, linked together by a central stalk and a peripheral stalk. During catalysis, ATP synthesis in the catalytic domain of F(1) is coupled via a rotary mechanism of the central stalk subunits to proton translocation. Its function is as follows. Component of the F(0) channel, it forms part of the peripheral stalk, linking F(1) to F(0). This chain is ATP synthase subunit b, found in Azobacteroides pseudotrichonymphae genomovar. CFP2.